The primary structure comprises 438 residues: V-type ATP synthase beta chain (438 aa).

The protein belongs to the ATPase alpha/beta chains family.

Its function is as follows. Produces ATP from ADP in the presence of a proton gradient across the membrane. The V-type beta chain is a regulatory subunit. In Protochlamydia amoebophila (strain UWE25), this protein is V-type ATP synthase beta chain.